A 158-amino-acid polypeptide reads, in one-letter code: MGRFLLVTLSLLVMAFFLNGANSCCCPQDWLPRNGFCYKVFNDLKTWDDAEMYCRKFKPGCHLASLHSNADAVEFSEYITDYLTGQGHVWIGLRDTKKKYIWEWTDRSRTDFLPWRKDQPDHFNNEEFCVEIVNFTGYLQWNDDSCTALRPFLCQCKY.

The signal sequence occupies residues 1 to 23; the sequence is MGRFLLVTLSLLVMAFFLNGANS. 3 disulfide bridges follow: C26/C37, C54/C154, and C129/C146. Positions 33–155 constitute a C-type lectin domain; the sequence is RNGFCYKVFN…CTALRPFLCQ (123 aa). 3 residues coordinate Ca(2+): Q119, D121, and E127. A Galactose-binding motif is present at residues 119–121; it reads QPD. A glycan (N-linked (GlcNAc...) asparagine) is linked at N134. N142 and D143 together coordinate Ca(2+).

The protein belongs to the true venom lectin family. As to quaternary structure, dimer. Probably disulfide-linked homodimer. Expressed by the venom gland.

Its subcellular location is the secreted. Functionally, galactose-binding lectin that binds to and agglutinates erythrocytes in a calcium-dependent manner. The polypeptide is C-type lectin galactose-binding isoform (Pseudechis australis (Mulga snake)).